Here is a 233-residue protein sequence, read N- to C-terminus: MIELKHVTFGYNKKQMVLQDINITIPDGENVGILGESGCGKSTLASLVLGLFKPVKGEIYLSDNAVLPIFQHPLTSFNPDWTIETSLKEALYYYRGLTDNTAQDQLLLQHLSTFELNAQLLTKLPSEVSGGQLQRFNVMRSLLAQPRVLICDEITSNLDVIAEQNVINILKAQTITNLNHFIVISHDLSVLQRLVNRIIVLKDGMIVDDFAIEELFNVDRHPYTKELVQAFSY.

The ABC transporter domain occupies 2–228; sequence IELKHVTFGY…DRHPYTKELV (227 aa). Position 35–42 (35–42) interacts with ATP; that stretch reads GESGCGKS.

This sequence belongs to the ABC transporter superfamily. The complex is composed of two ATP-binding proteins (NikD and NikE), two transmembrane proteins (NikB and NikC) and a solute-binding protein (NikA).

Its subcellular location is the cell membrane. It carries out the reaction Ni(2+)(out) + ATP + H2O = Ni(2+)(in) + ADP + phosphate + H(+). In terms of biological role, part of the ABC transporter complex NikABCDE (Opp2) involved in nickel import. Probably responsible for energy coupling to the transport system. The chain is Nickel import system ATP-binding protein NikE from Staphylococcus aureus (strain USA300).